A 143-amino-acid polypeptide reads, in one-letter code: Turripeptide VIII-01 (143 aa).

Residues 1–23 (MALSLDILMSVTMVTAVLTTVNA) form the signal peptide. A propeptide spanning residues 24 to 32 (EYKDSRLDS) is cleaved from the precursor.

Post-translationally, contains 4 disulfide bonds. As to expression, expressed by the venom duct.

It is found in the secreted. This is Turripeptide VIII-01 from Gemmula speciosa (Splendid gem-turris).